A 425-amino-acid chain; its full sequence is Glutamyl-tRNA reductase (425 aa).

Substrate is bound by residues Thr49–Arg52, Ser109, Glu114–Gln116, and Gln120. Cys50 functions as the Nucleophile in the catalytic mechanism. Position 189–194 (Gly189–Gly194) interacts with NADP(+).

Belongs to the glutamyl-tRNA reductase family. Homodimer.

The catalysed reaction is (S)-4-amino-5-oxopentanoate + tRNA(Glu) + NADP(+) = L-glutamyl-tRNA(Glu) + NADPH + H(+). The protein operates within porphyrin-containing compound metabolism; protoporphyrin-IX biosynthesis; 5-aminolevulinate from L-glutamyl-tRNA(Glu): step 1/2. Its pathway is porphyrin-containing compound metabolism; chlorophyll biosynthesis. In terms of biological role, catalyzes the NADPH-dependent reduction of glutamyl-tRNA(Glu) to glutamate 1-semialdehyde (GSA). The protein is Glutamyl-tRNA reductase of Pelodictyon phaeoclathratiforme (strain DSM 5477 / BU-1).